Consider the following 924-residue polypeptide: Lon protease homolog 3, mitochondrial (924 aa).

Residues 1 to 63 constitute a mitochondrion transit peptide; sequence MMPKRFNTSG…PVQSLLLFRA (63 aa). Residues 112–325 form the Lon N-terminal domain; that stretch reads VIALPLPHKP…LTLELVKKQV (214 aa). 447–454 lines the ATP pocket; it reads GPPGVGKT. One can recognise a Lon proteolytic domain in the interval 738–922; that stretch reads QTPVGVVMGL…EKIFDLAFNY (185 aa). Catalysis depends on residues S828 and K871.

This sequence belongs to the peptidase S16 family. Homohexamer or homoheptamer. Organized in a ring with a central cavity.

Its subcellular location is the mitochondrion matrix. It catalyses the reaction Hydrolysis of proteins in presence of ATP.. ATP-dependent serine protease that mediates the selective degradation of misfolded, unassembled or oxidatively damaged polypeptides as well as certain short-lived regulatory proteins in the mitochondrial matrix. May also have a chaperone function in the assembly of inner membrane protein complexes. Participates in the regulation of mitochondrial gene expression and in the maintenance of the integrity of the mitochondrial genome. Binds to mitochondrial DNA in a site-specific manner. The protein is Lon protease homolog 3, mitochondrial (LON3) of Arabidopsis thaliana (Mouse-ear cress).